Here is a 65-residue protein sequence, read N- to C-terminus: Large ribosomal subunit protein bL31 (65 aa).

Zn(2+)-binding residues include Cys16, Cys18, Cys36, and Cys39.

The protein belongs to the bacterial ribosomal protein bL31 family. Type A subfamily. As to quaternary structure, part of the 50S ribosomal subunit. Zn(2+) serves as cofactor.

Its function is as follows. Binds the 23S rRNA. The chain is Large ribosomal subunit protein bL31 from Desulfitobacterium hafniense (strain DSM 10664 / DCB-2).